The chain runs to 283 residues: Formamidopyrimidine-DNA glycosylase (283 aa).

Proline 2 functions as the Schiff-base intermediate with DNA in the catalytic mechanism. Glutamate 3 serves as the catalytic Proton donor. Residue lysine 58 is the Proton donor; for beta-elimination activity of the active site. DNA contacts are provided by histidine 100, arginine 119, and arginine 162. The FPG-type zinc finger occupies 247-283 (DVYGREGAPCKGEGCTGQIKRIVQSGRSSFYCAQCQR). The active-site Proton donor; for delta-elimination activity is the arginine 273.

Belongs to the FPG family. In terms of assembly, monomer. The cofactor is Zn(2+).

The enzyme catalyses Hydrolysis of DNA containing ring-opened 7-methylguanine residues, releasing 2,6-diamino-4-hydroxy-5-(N-methyl)formamidopyrimidine.. It catalyses the reaction 2'-deoxyribonucleotide-(2'-deoxyribose 5'-phosphate)-2'-deoxyribonucleotide-DNA = a 3'-end 2'-deoxyribonucleotide-(2,3-dehydro-2,3-deoxyribose 5'-phosphate)-DNA + a 5'-end 5'-phospho-2'-deoxyribonucleoside-DNA + H(+). Functionally, involved in base excision repair of DNA damaged by oxidation or by mutagenic agents. Acts as a DNA glycosylase that recognizes and removes damaged bases. Has a preference for oxidized purines, such as 7,8-dihydro-8-oxoguanine (8-oxoG). Has AP (apurinic/apyrimidinic) lyase activity and introduces nicks in the DNA strand. Cleaves the DNA backbone by beta-delta elimination to generate a single-strand break at the site of the removed base with both 3'- and 5'-phosphates. The chain is Formamidopyrimidine-DNA glycosylase from Roseobacter denitrificans (strain ATCC 33942 / OCh 114) (Erythrobacter sp. (strain OCh 114)).